A 370-amino-acid polypeptide reads, in one-letter code: Cobalt-precorrin-5B C(1)-methyltransferase (370 aa).

This sequence belongs to the CbiD family.

The catalysed reaction is Co-precorrin-5B + S-adenosyl-L-methionine = Co-precorrin-6A + S-adenosyl-L-homocysteine. It participates in cofactor biosynthesis; adenosylcobalamin biosynthesis; cob(II)yrinate a,c-diamide from sirohydrochlorin (anaerobic route): step 6/10. In terms of biological role, catalyzes the methylation of C-1 in cobalt-precorrin-5B to form cobalt-precorrin-6A. This Prochlorococcus marinus (strain MIT 9312) protein is Cobalt-precorrin-5B C(1)-methyltransferase.